The primary structure comprises 716 residues: DNA ligase (716 aa).

Residues 49-53 (DAAYD), 98-99 (SL), and Glu-132 contribute to the NAD(+) site. Catalysis depends on Lys-134, which acts as the N6-AMP-lysine intermediate. NAD(+) contacts are provided by Arg-155, Glu-192, Lys-308, and Lys-332. The Zn(2+) site is built by Cys-437, Cys-439, Cys-461, and Cys-467. The BRCT domain occupies 638–716 (KRNSPIATKT…EDEWLQLIGE (79 aa)).

This sequence belongs to the NAD-dependent DNA ligase family. LigA subfamily. Mg(2+) is required as a cofactor. Mn(2+) serves as cofactor.

The enzyme catalyses NAD(+) + (deoxyribonucleotide)n-3'-hydroxyl + 5'-phospho-(deoxyribonucleotide)m = (deoxyribonucleotide)n+m + AMP + beta-nicotinamide D-nucleotide.. DNA ligase that catalyzes the formation of phosphodiester linkages between 5'-phosphoryl and 3'-hydroxyl groups in double-stranded DNA using NAD as a coenzyme and as the energy source for the reaction. It is essential for DNA replication and repair of damaged DNA. The chain is DNA ligase from Bradyrhizobium sp. (strain ORS 278).